The primary structure comprises 200 residues: NADH-quinone oxidoreductase subunit I 1 (200 aa).

2 4Fe-4S ferredoxin-type domains span residues Leu52 to Ala82 and Arg98 to Glu127. [4Fe-4S] cluster contacts are provided by Cys62, Cys65, Cys68, Cys72, Cys107, Cys110, Cys113, and Cys117. The interval Thr181–Ala200 is disordered. The segment covering Lys189–Ala200 has biased composition (basic and acidic residues).

The protein belongs to the complex I 23 kDa subunit family. NDH-1 is composed of 14 different subunits. Subunits NuoA, H, J, K, L, M, N constitute the membrane sector of the complex. The cofactor is [4Fe-4S] cluster.

Its subcellular location is the cell membrane. It carries out the reaction a quinone + NADH + 5 H(+)(in) = a quinol + NAD(+) + 4 H(+)(out). In terms of biological role, NDH-1 shuttles electrons from NADH, via FMN and iron-sulfur (Fe-S) centers, to quinones in the respiratory chain. The immediate electron acceptor for the enzyme in this species is believed to be ubiquinone. Couples the redox reaction to proton translocation (for every two electrons transferred, four hydrogen ions are translocated across the cytoplasmic membrane), and thus conserves the redox energy in a proton gradient. The protein is NADH-quinone oxidoreductase subunit I 1 of Streptomyces avermitilis (strain ATCC 31267 / DSM 46492 / JCM 5070 / NBRC 14893 / NCIMB 12804 / NRRL 8165 / MA-4680).